The following is a 117-amino-acid chain: MPRVKRGFKARQRRNKVLKLAKGYRGARSKLFRSATEAVDRALNYAFRDRRVKKRDFRALWIARINAAARINGLSYSKLIHGLKIAKVEVDRKVMADLAVSDPRGFAEIASLAKANI.

The protein belongs to the bacterial ribosomal protein bL20 family.

In terms of biological role, binds directly to 23S ribosomal RNA and is necessary for the in vitro assembly process of the 50S ribosomal subunit. It is not involved in the protein synthesizing functions of that subunit. This Geotalea uraniireducens (strain Rf4) (Geobacter uraniireducens) protein is Large ribosomal subunit protein bL20.